Here is a 397-residue protein sequence, read N- to C-terminus: Lysophospholipid transporter LplT (397 aa).

At 1–17 (MSESVHTNTSLWSKGMK) the chain is on the periplasmic side. A helical transmembrane segment spans residues 18-38 (AVIVAQFLSAFGDNALLFATL). The Cytoplasmic segment spans residues 39 to 52 (ALLKAQFYPEWSQP). The helical transmembrane segment at 53–73 (ILQMVFVGAYILFAPFVGQVA) threads the bilayer. Residues 74–90 (DSFAKGRVMMFANGLKL) are Periplasmic-facing. The chain crosses the membrane as a helical span at residues 91–111 (LGAASICFGINPFLGYTLVGV). At 112–144 (GAAAYSPAKYGILGELTTGSKLVKANGLMEAST) the chain is on the cytoplasmic side. A helical transmembrane segment spans residues 145 to 165 (IAAILLGSVAGGVLADWHILV). Position 166 (Ala-166) is a topological domain, periplasmic. Residues 167–187 (LVACALAYGGAVVANIYIPKL) traverse the membrane as a helical segment. The Cytoplasmic segment spans residues 188 to 226 (AAARPGQSWNLISMTRSFLNACTSLWRNGETRFSLVGTS). Residues 227-247 (LFWGAGVTLRFLLVLWVPVAL) form a helical membrane-spanning segment. The Periplasmic portion of the chain corresponds to 248-256 (GITDNATPT). Residues 257–277 (YLNAMVAIGIVVGAGAAAKLV) form a helical membrane-spanning segment. Over 278–280 (TLE) the chain is Cytoplasmic. Residues 281-301 (TVSRCMPAGILIGVVVLIFSL) form a helical membrane-spanning segment. Residues 302–304 (QHE) are Periplasmic-facing. Residues 305 to 325 (LLPAYALLMLIGVLGGFFVVP) traverse the membrane as a helical segment. Over 326-343 (LNALLQERGKKSVGAGNA) the chain is Cytoplasmic. The helical transmembrane segment at 344–364 (IAVQNLGENSAMLLMLGIYSL) threads the bilayer. Topologically, residues 365–366 (AV) are periplasmic. A helical membrane pass occupies residues 367 to 387 (MVGIPVVPIGIGFGALFALAI). Residues 388-397 (TALWIWQRRH) are Cytoplasmic-facing.

The protein belongs to the major facilitator superfamily. LplT (TC 2.A.1.42) family.

The protein resides in the cell inner membrane. Its function is as follows. Catalyzes the facilitated diffusion of 2-acyl-glycero-3-phosphoethanolamine (2-acyl-GPE) into the cell. This Escherichia coli O81 (strain ED1a) protein is Lysophospholipid transporter LplT.